The sequence spans 298 residues: Probable 2-(5''-triphosphoribosyl)-3'-dephosphocoenzyme-A synthase 2 (298 aa).

Belongs to the CitG/MdcB family.

The enzyme catalyses 3'-dephospho-CoA + ATP = 2'-(5''-triphospho-alpha-D-ribosyl)-3'-dephospho-CoA + adenine. The chain is Probable 2-(5''-triphosphoribosyl)-3'-dephosphocoenzyme-A synthase 2 from Salmonella typhi.